Consider the following 137-residue polypeptide: Small ribosomal subunit protein uS11 (137 aa).

The span at 1–10 (MPPKSRSTGP) shows a compositional bias: polar residues. 2 disordered regions span residues 1–27 (MPPK…IPHG) and 116–137 (GTIS…RRRV). Residues 12 to 21 (KTQKTRRRDK) are compositionally biased toward basic residues.

It belongs to the universal ribosomal protein uS11 family. Part of the 30S ribosomal subunit. Interacts with proteins S7 and S18. Binds to IF-3.

In terms of biological role, located on the platform of the 30S subunit, it bridges several disparate RNA helices of the 16S rRNA. Forms part of the Shine-Dalgarno cleft in the 70S ribosome. The chain is Small ribosomal subunit protein uS11 from Rhodococcus erythropolis (strain PR4 / NBRC 100887).